The primary structure comprises 246 residues: Ribosomal RNA large subunit methyltransferase E (246 aa).

S-adenosyl-L-methionine-binding residues include Gly81, Trp83, Asp104, Asp120, and Asp144. Lys184 acts as the Proton acceptor in catalysis.

Belongs to the class I-like SAM-binding methyltransferase superfamily. RNA methyltransferase RlmE family.

It localises to the cytoplasm. The enzyme catalyses uridine(2552) in 23S rRNA + S-adenosyl-L-methionine = 2'-O-methyluridine(2552) in 23S rRNA + S-adenosyl-L-homocysteine + H(+). In terms of biological role, specifically methylates the uridine in position 2552 of 23S rRNA at the 2'-O position of the ribose in the fully assembled 50S ribosomal subunit. The chain is Ribosomal RNA large subunit methyltransferase E from Agrobacterium fabrum (strain C58 / ATCC 33970) (Agrobacterium tumefaciens (strain C58)).